Reading from the N-terminus, the 185-residue chain is RING-H2 finger protein ATL8 (185 aa).

The chain crosses the membrane as a helical span at residues 28–48 (LVLILAVLLCALTCIIGLIAV). Residues 104-146 (CAICLTEFAAGDELRVLPQCGHGFHVSCIDTWLGSHSSCPSCR) form an RING-type; atypical zinc finger. Residues 161-185 (PGSSSSGPEPDTRIKQREDGPDNLP) form a disordered region. The span at 170–185 (PDTRIKQREDGPDNLP) shows a compositional bias: basic and acidic residues.

Belongs to the RING-type zinc finger family. ATL subfamily.

Its subcellular location is the membrane. The enzyme catalyses S-ubiquitinyl-[E2 ubiquitin-conjugating enzyme]-L-cysteine + [acceptor protein]-L-lysine = [E2 ubiquitin-conjugating enzyme]-L-cysteine + N(6)-ubiquitinyl-[acceptor protein]-L-lysine.. It functions in the pathway protein modification; protein ubiquitination. In Arabidopsis thaliana (Mouse-ear cress), this protein is RING-H2 finger protein ATL8 (ATL8).